A 119-amino-acid polypeptide reads, in one-letter code: Methylglyoxal synthase (119 aa).

An MGS-like domain is found at 1–119; it reads MRIALIAHDK…GTADLIIRQF (119 aa). Substrate is bound by residues His8, Lys12, 34–37, and 54–55; these read TGTT and SG. Asp60 serves as the catalytic Proton donor/acceptor. His87 lines the substrate pocket.

Belongs to the methylglyoxal synthase family.

The enzyme catalyses dihydroxyacetone phosphate = methylglyoxal + phosphate. In terms of biological role, catalyzes the formation of methylglyoxal from dihydroxyacetone phosphate. This chain is Methylglyoxal synthase, found in Clostridium botulinum (strain Alaska E43 / Type E3).